The sequence spans 66 residues: MKTNALRDMTNDELLQKLAEIRQALFNLNFQHVTGQLENTAQINKNRKDIARILTILHEREQKTAA.

This sequence belongs to the universal ribosomal protein uL29 family.

This Syntrophobacter fumaroxidans (strain DSM 10017 / MPOB) protein is Large ribosomal subunit protein uL29.